Reading from the N-terminus, the 401-residue chain is MDTQAFKQTLHKSDRYNRRGFGSANKRAQALAEAYQSGLIGSIRENGNLLEHGRLKVKLAEAFGFCWGVERSVAMAYETRKHYPNERIWITNEIIHNPSVNDHLRKMNVLFISEEKGVKDFSVVKDGDVVILPAFGATVQDMKLLHDRGCHIIDTTCPWVSKVWHTVEKHKKHTFTSIIHGKYKHEETLATSSFAGTYLVLFDLEEANYVSDYILGKGNREDFLKRFSKASSAGFDPDKDLQKVGVANQTTMLKSETEEIGRLFEKTMLQRFGPAQLNEHFLAINTICDATEERQGAMFSLVDEPLDLMVVIGGFNSSNTTHLQEIAISRGIRSFHIDTPERIGEETNTITHMPLEGGELLTEENFLQNGNISVGITSGASTPDRVVEDVIHKLMKIGENF.

Position 66 (Cys66) interacts with [4Fe-4S] cluster. A (2E)-4-hydroxy-3-methylbut-2-enyl diphosphate-binding site is contributed by His96. Position 96 (His96) interacts with dimethylallyl diphosphate. Position 96 (His96) interacts with isopentenyl diphosphate. Cys157 serves as a coordination point for [4Fe-4S] cluster. A (2E)-4-hydroxy-3-methylbut-2-enyl diphosphate-binding site is contributed by His185. Residue His185 participates in dimethylallyl diphosphate binding. His185 lines the isopentenyl diphosphate pocket. The active-site Proton donor is Glu187. Residue Thr250 coordinates (2E)-4-hydroxy-3-methylbut-2-enyl diphosphate. Cys288 is a binding site for [4Fe-4S] cluster. 4 residues coordinate (2E)-4-hydroxy-3-methylbut-2-enyl diphosphate: Ser317, Ser318, Asn319, and Ser381. Dimethylallyl diphosphate contacts are provided by Ser317, Ser318, Asn319, and Ser381. Isopentenyl diphosphate is bound by residues Ser317, Ser318, Asn319, and Ser381.

Belongs to the IspH family. It depends on [4Fe-4S] cluster as a cofactor.

The catalysed reaction is isopentenyl diphosphate + 2 oxidized [2Fe-2S]-[ferredoxin] + H2O = (2E)-4-hydroxy-3-methylbut-2-enyl diphosphate + 2 reduced [2Fe-2S]-[ferredoxin] + 2 H(+). The enzyme catalyses dimethylallyl diphosphate + 2 oxidized [2Fe-2S]-[ferredoxin] + H2O = (2E)-4-hydroxy-3-methylbut-2-enyl diphosphate + 2 reduced [2Fe-2S]-[ferredoxin] + 2 H(+). The protein operates within isoprenoid biosynthesis; dimethylallyl diphosphate biosynthesis; dimethylallyl diphosphate from (2E)-4-hydroxy-3-methylbutenyl diphosphate: step 1/1. Its pathway is isoprenoid biosynthesis; isopentenyl diphosphate biosynthesis via DXP pathway; isopentenyl diphosphate from 1-deoxy-D-xylulose 5-phosphate: step 6/6. Catalyzes the conversion of 1-hydroxy-2-methyl-2-(E)-butenyl 4-diphosphate (HMBPP) into a mixture of isopentenyl diphosphate (IPP) and dimethylallyl diphosphate (DMAPP). Acts in the terminal step of the DOXP/MEP pathway for isoprenoid precursor biosynthesis. The protein is 4-hydroxy-3-methylbut-2-enyl diphosphate reductase of Prochlorococcus marinus (strain NATL1A).